A 382-amino-acid chain; its full sequence is MKALHFGAGNIGRGFIGKLLADAGIQLTFADVNQVVLDALNARHSYQVHVVGENEQVDTVSGVNAVSSIGDDVVDLIAHVDLITTAVGPVVLERIAPAIAKGLVKRKAQGVDAPLNIIACENMVRGTTQLKGHVMNALADGDKAWVEQHVGFVDSAVDRIVPPSASATHDPLEVTVETFSEWIVDKTQFKGALPTIPGMELTDNLMAFVERKLFTLNTGHAITAYLGKLAGHQTIRDAILDESIRAVVKGAMEESGAVLIKRYGFDADKHAAYIQKILGRFENPYLKDDVERVGRQPLRKLSAGDRLIKPLLGTLEYGLPHVNLVKGIAAAMHFRSEEDPQAQELAALIDEKGPQAALAQISGLDANSDVVAEAVNAYNATK.

3 to 14 is a binding site for NAD(+); the sequence is ALHFGAGNIGRG.

The protein belongs to the mannitol dehydrogenase family.

The enzyme catalyses D-mannitol 1-phosphate + NAD(+) = beta-D-fructose 6-phosphate + NADH + H(+). The sequence is that of Mannitol-1-phosphate 5-dehydrogenase from Salmonella schwarzengrund (strain CVM19633).